Here is a 365-residue protein sequence, read N- to C-terminus: Eukaryotic translation initiation factor 3 subunit H (365 aa).

The MPN domain maps to 11–160; that stretch reads VKVDALVVMK…LRAFRLSSKF (150 aa).

Belongs to the eIF-3 subunit H family. As to quaternary structure, component of the eukaryotic translation initiation factor 3 (eIF-3) complex.

Its subcellular location is the cytoplasm. Its function is as follows. Component of the eukaryotic translation initiation factor 3 (eIF-3) complex, which is involved in protein synthesis of a specialized repertoire of mRNAs and, together with other initiation factors, stimulates binding of mRNA and methionyl-tRNAi to the 40S ribosome. The eIF-3 complex specifically targets and initiates translation of a subset of mRNAs involved in cell proliferation. The polypeptide is Eukaryotic translation initiation factor 3 subunit H (Aspergillus oryzae (strain ATCC 42149 / RIB 40) (Yellow koji mold)).